Consider the following 419-residue polypeptide: Inward rectifier potassium channel 16 (419 aa).

At 1–67 (MSYYGSSYRI…MVDIFTTLVD (67 aa)) the chain is on the cytoplasmic side. The chain crosses the membrane as a helical span at residues 68 to 94 (TKWRHMFVVFSLSYILSWLIFGSIFWL). The Extracellular segment spans residues 95 to 117 (IALHHGDLLSDPDITPCVDNVHS). Positions 118-134 (FTAAFLFSLETQTTIGY) form an intramembrane region, helical; Pore-forming. A Selectivity filter motif is present at residues 131–136 (TIGYGY). At 135–143 (GYRCVTEEC) the chain is on the extracellular side. The chain crosses the membrane as a helical span at residues 144-171 (SVAVLTVILQSILSCIINTFIIGAALAK). Residues 172-419 (MATARKRAQT…LNRISMESQM (248 aa)) lie on the Cytoplasmic side of the membrane. Serine 358, serine 374, and serine 376 each carry phosphoserine.

This sequence belongs to the inward rectifier-type potassium channel (TC 1.A.2.1) family. KCNJ16 subfamily. It forms heteromeric channels with Kir4.1/KCNJ10; this interaction is required for KCNJ16 localization to the basolateral membrane in kidney cells. As a heteromer with KCNJ10, may interact with MAGI1; this interaction may facilitate KCNJ10/KCNJ16 potassium channel expression at the basolateral membrane in kidney cells. May form heteromers with Kir2.1/KCNJ2. Can form heteromeric channels with Kir4.2/KCNJ15. As to expression, expressed in the brain, testis, liver, spleen, kidney, submaxillary gland and adrenals. In the kidney, expressed in the epithelial cells of both proximal and distal convoluted tubules, in the endothelial cells surrounding glomerular capillaries and in the flattened parietal layer of Bowman's capsule.

It localises to the membrane. The protein localises to the basolateral cell membrane. The enzyme catalyses K(+)(in) = K(+)(out). Channel activity is strongly regulated by variations of cytosolic pH; channels are activated by alkaline and inhibited by acidic pH values. Activated by phosphatidylinositol 4,5 biphosphate (PtdIns(4,5)P2). Functionally, inward rectifier potassium channels are characterized by a greater tendency to allow potassium to flow into the cell rather than out of it. Their voltage dependence is regulated by the concentration of extracellular potassium; as external potassium is raised, the voltage range of the channel opening shifts to more positive voltages. The inward rectification is mainly due to the blockage of outward current by internal magnesium. KCNJ16 may be involved in the regulation of fluid and pH balance. In the kidney, together with KCNJ10, mediates basolateral K(+) recycling in distal tubules; this process is critical for Na(+) reabsorption at the tubules. This Rattus norvegicus (Rat) protein is Inward rectifier potassium channel 16 (Kcnj16).